The following is a 927-amino-acid chain: Lysine-specific demethylase JMJ28 (927 aa).

Positions 7–52 constitute a WRC domain; the sequence is VPDEFRCNRSDGKQWRCKRRALEGKKMCESHHSQQSLKRSKQKVAE. The short motif at 30-37 is the Nuclear localization signal 1 element; it reads GKKMCESH. Residues 30–92 are disordered; that stretch reads GKKMCESHHS…RLGKSKRKRV (63 aa). Residues 80–91 show a composition bias toward basic residues; it reads RSKRLGKSKRKR. The short motif at 127 to 134 is the Nuclear localization signal 2 element; that stretch reads EKRKRLPN. Residues cysteine 227, cysteine 230, cysteine 241, cysteine 244, cysteine 250, cysteine 253, cysteine 269, and cysteine 272 each coordinate Zn(2+). The segment at 227–273 adopts an RING-type; degenerate zinc-finger fold; sequence CHWCGTRGFGDLISCLSCEREFFCIDCIEKRNKGSKEEVEKKCPVCR. The span at 330-339 shows a compositional bias: basic and acidic residues; that stretch reads ENDAEKKEGN. 2 disordered regions span residues 330 to 359 and 701 to 736; these read ENDA…QPCS and RSKN…SQHC. In terms of domain architecture, JmjC spans 601-881; that stretch reads FPNHYAEILN…ESIKRVKELN (281 aa).

The protein belongs to the JARID1 histone demethylase family. In terms of assembly, interacts with the FBH transcription factors FBH1, FBH2, FBH3 and FBH4. Fe(2+) serves as cofactor. In terms of tissue distribution, expressed in inflorescences, flowers, roots, siliques, leaves and stems, especially in the vasculature (mainly phloem), with highest levels in floral organs. Present at high levels in flowers, shoot apex and young seeds, but observed at low levels in dry seeds, root apex and anthers.

It is found in the nucleus. May function as histone H3 lysine demethylase and be involved in regulation of gene expression. Regulates flowering time by promoting CONSTANS (CO) and CONSTANS-LIKE genes (e.g. COL2 and COL5) expression via interaction with FBH transcription factors (FBH1, FBH2, FBH3 and FBH4) at their loci to remove H3K9me2 repressive histone marks. Also modulates the expression of several developmental genes such as MYB30, TFS1, AGL6 and RVE2. The sequence is that of Lysine-specific demethylase JMJ28 from Arabidopsis thaliana (Mouse-ear cress).